Here is a 247-residue protein sequence, read N- to C-terminus: Protein SODIUM POTASSIUM ROOT DEFECTIVE 3 (247 aa).

Positions 130 to 166 (GSTGQDTVATEESEASAPKRGSSGPVEEKKKSSGSGS) are disordered. The HMA domain occupies 167–235 (DQVVVLRVSL…KVKNAQFWTP (69 aa)). The a metal cation site is built by Cys180 and Cys183.

The protein resides in the cytoplasm. Its function is as follows. Heavy metal-associated protein involved in salt tolerance. The protein is Protein SODIUM POTASSIUM ROOT DEFECTIVE 3 of Arabidopsis thaliana (Mouse-ear cress).